A 25-amino-acid polypeptide reads, in one-letter code: U11-ctenitoxin-Co1b (25 aa).

Disulfide bonds link C4/C18 and C11/C22.

Monomer. Expressed by the venom gland.

It localises to the secreted. In terms of biological role, neurotoxin. The polypeptide is U11-ctenitoxin-Co1b (Ctenus ornatus (Brazilian spider)).